The chain runs to 217 residues: MEHYEHVITSIVAMVVALGVVLAAGKPKIMPSKLQFVIESYINFCKSMVTENMGEQGLRYLPLIASIGLFVFFGNVMELLPFVDAPTGNINTTLALTLIVFFLYHFEGFRVNGLGYIKHFMGPIKALAPFFFIIEIMSHLGRVVSLSLRLFANMKGGAILLISIIGVLIGNPFTLAVSPIVLVFLITIKVLAIVLQAFIFMILSTIYIAGAVVHEEH.

6 helical membrane passes run 5 to 25 (EHVITSIVAMVVALGVVLAAG), 63 to 83 (LIASIGLFVFFGNVMELLPFV), 89 to 109 (NINTTLALTLIVFFLYHFEGF), 120 to 140 (FMGPIKALAPFFFIIEIMSHL), 157 to 177 (GAILLISIIGVLIGNPFTLAV), and 191 to 213 (LAIVLQAFIFMILSTIYIAGAVV).

It belongs to the ATPase A chain family. In terms of assembly, F-type ATPases have 2 components, CF(1) - the catalytic core - and CF(0) - the membrane proton channel. CF(1) has five subunits: alpha(3), beta(3), gamma(1), delta(1), epsilon(1). CF(0) has three main subunits: a(1), b(2) and c(9-12). The alpha and beta chains form an alternating ring which encloses part of the gamma chain. CF(1) is attached to CF(0) by a central stalk formed by the gamma and epsilon chains, while a peripheral stalk is formed by the delta and b chains.

It localises to the cell inner membrane. Its function is as follows. Key component of the proton channel; it plays a direct role in the translocation of protons across the membrane. The sequence is that of ATP synthase subunit a from Hydrogenobaculum sp. (strain Y04AAS1).